Here is a 260-residue protein sequence, read N- to C-terminus: MTQTNDKLVIAGREFDSRLMVGTGKYADFQQMVRAIEVSGAQIITVAVRRVNISDRGKESLLDHIDLKKYTLLPNTAGCYTAEDAIRTCRLAREAGLSDFVKLEVLGDEKTLYPNNEELLKAAKVLLAEGFTVLPYTSDDPIVCRRLEDMGCAAVMPLGAPIGSGLGIRNPYNIQIILESVKVPVIVDAGVGTASDAAIAMELGCHGVLMNTAIAGAKDPVAMAEAMNCAVRAGRLAYLAGRIPRKLYASASSPLTGIIG.

The Schiff-base intermediate with DXP role is filled by K102. Residues G163, 189–190 (AG), and 211–212 (NT) each bind 1-deoxy-D-xylulose 5-phosphate.

This sequence belongs to the ThiG family. Homotetramer. Forms heterodimers with either ThiH or ThiS.

It is found in the cytoplasm. It catalyses the reaction [ThiS sulfur-carrier protein]-C-terminal-Gly-aminoethanethioate + 2-iminoacetate + 1-deoxy-D-xylulose 5-phosphate = [ThiS sulfur-carrier protein]-C-terminal Gly-Gly + 2-[(2R,5Z)-2-carboxy-4-methylthiazol-5(2H)-ylidene]ethyl phosphate + 2 H2O + H(+). Its pathway is cofactor biosynthesis; thiamine diphosphate biosynthesis. Catalyzes the rearrangement of 1-deoxy-D-xylulose 5-phosphate (DXP) to produce the thiazole phosphate moiety of thiamine. Sulfur is provided by the thiocarboxylate moiety of the carrier protein ThiS. In vitro, sulfur can be provided by H(2)S. The sequence is that of Thiazole synthase from Geobacter sp. (strain M21).